Here is a 692-residue protein sequence, read N- to C-terminus: Elongation factor G (692 aa).

The tr-type G domain maps to 8–282 (ENTRNIGIMA…AVIDYLPSPL (275 aa)). GTP contacts are provided by residues 17 to 24 (AHIDAGKT), 81 to 85 (DTPGH), and 135 to 138 (NKMD).

It belongs to the TRAFAC class translation factor GTPase superfamily. Classic translation factor GTPase family. EF-G/EF-2 subfamily.

It localises to the cytoplasm. Catalyzes the GTP-dependent ribosomal translocation step during translation elongation. During this step, the ribosome changes from the pre-translocational (PRE) to the post-translocational (POST) state as the newly formed A-site-bound peptidyl-tRNA and P-site-bound deacylated tRNA move to the P and E sites, respectively. Catalyzes the coordinated movement of the two tRNA molecules, the mRNA and conformational changes in the ribosome. This is Elongation factor G from Bacillus mycoides (strain KBAB4) (Bacillus weihenstephanensis).